The sequence spans 327 residues: MVAVKALLFACTLRTCVFKPCCDMAIFLIFLNAFIWSSSFALSKSAMEAAAPLFVTGSRMVLAGVVLFGLLLCKRESLRLPRPAIMPIVLLSVIGFYLTNVLEFIGLQRLSSSTACFIYGFSPFTAAFCSYVQLREVVTWKKLGGLSLGLVSYLVYLLFGGSEDVAEWGWQLGLPELLLIAATCLSSYGWTLLRKLGRRCESLSMTAINAYAMVIAGVLSLIHSAVTEVWNPVPVENPLLFLQAIGALVIFSNLICYNLFAKLLRSFSSTFLSFCNLVMPLFASFFGWLLLGESFPPGLLFAVGFMVLGCRLIYHEEFRQGYVLTSE.

10 consecutive transmembrane segments (helical) span residues 22–42, 53–73, 85–105, 114–134, 143–163, 165–185, 202–222, 240–260, 271–291, and 294–314; these read CDMA…SFAL, LFVT…LLLC, IMPI…LEFI, TACF…YVQL, LGGL…GGSE, VAEW…ATCL, SLSM…LSLI, LFLQ…YNLF, FLSF…WLLL, and SFPP…RLIY. The EamA 1 domain occupies 34 to 157; that stretch reads FIWSSSFALS…LGLVSYLVYL (124 aa). The region spanning 189–313 is the EamA 2 domain; it reads GWTLLRKLGR…GFMVLGCRLI (125 aa).

It belongs to the drug/metabolite transporter (DMT) superfamily. 10 TMS drug/metabolite exporter (DME) (TC 2.A.7.3) family.

It is found in the cell membrane. CCCP treatment reduces SAM intracellular uptake by 50%. Transports S-adenosylmethionine (SAM) and S-adenosylhomocysteine (SAH). Allows bacteria to acquire SAM from the eukaryotic host cell and to likely remove the toxic by-product SAH. The chain is S-adenosylmethionine/S-adenosylhomocysteine transporter from Chlamydia trachomatis serovar L2 (strain ATCC VR-902B / DSM 19102 / 434/Bu).